Consider the following 736-residue polypeptide: Sulfate transporter (736 aa).

Residues 1-28 (MSSESKEPHVLSPKDSFEGNDRYSPPSR) are disordered. S12 and S16 each carry phosphoserine. Helical transmembrane passes span 114–134 (VMSGLIVGILLVPQSIAYSLL) and 139–159 (PIYGLYTSFFASLIYFLLGTS). 2 N-linked (GlcNAc...) asparagine glycosylation sites follow: N201 and N207. A run of 6 helical transmembrane segments spans residues 229 to 249 (FLAGIYQVAMGFFQVGFVSVY), 257 to 277 (GFVTGASFTILTSQAKYLLGL), 380 to 400 (LIPSVAVDAIAISIIGFAITV), 422 to 442 (AIGFCNIIPSFFHCFTTSAAL), 457 to 477 (LSGVMTALVLLLVLLVIAPLF), and 526 to 546 (LISTELGLLIGVCFSMFCVIL). Positions 570–721 (AYKNLQARPG…YSVYEAMAFA (152 aa)) constitute an STAS domain.

It belongs to the SLC26A/SulP transporter (TC 2.A.53) family. N-glycosylated.

It is found in the cell membrane. The protein localises to the apical cell membrane. The catalysed reaction is oxalate(in) + sulfate(out) = oxalate(out) + sulfate(in). The enzyme catalyses sulfate(out) + 2 chloride(in) = sulfate(in) + 2 chloride(out). It catalyses the reaction oxalate(out) + 2 chloride(in) = oxalate(in) + 2 chloride(out). It carries out the reaction bromide(in) + chloride(out) = bromide(out) + chloride(in). The catalysed reaction is nitrate(in) + chloride(out) = nitrate(out) + chloride(in). The enzyme catalyses iodide(in) + chloride(out) = iodide(out) + chloride(in). Functionally, sulfate transporter which mediates sulfate uptake into chondrocytes in order to maintain adequate sulfation of proteoglycans which is needed for cartilage development. Mediates electroneutral anion exchange of sulfate ions for oxalate ions, sulfate and oxalate ions for chloride and/or hydroxyl ions and chloride ions for bromide, iodide and nitrate ions. The coupling of sulfate transport to both hydroxyl and chloride ions likely serves to ensure transport at both acidic pH when most sulfate uptake is mediated by sulfate-hydroxide exchange and alkaline pH when most sulfate uptake is mediated by sulfate-chloride exchange. Essential for chondrocyte proliferation, differentiation and cell size expansion. The chain is Sulfate transporter (SLC26A2) from Equus caballus (Horse).